Here is a 301-residue protein sequence, read N- to C-terminus: Fluoroquinolones export ATP-binding protein MT2762 (301 aa).

In terms of domain architecture, ABC transporter spans 18–246; the sequence is IRVRGLTFRY…RSRRRVRVEY (229 aa). Residue 52–59 participates in ATP binding; it reads GPSGAGKS.

Belongs to the ABC transporter superfamily. The complex is composed of 2 ATP-binding proteins and 2 transmembrane proteins.

It is found in the cell membrane. Functionally, part of the ABC transporter complex involved in fluoroquinolones export. Probably responsible for energy coupling to the transport system. This Mycobacterium tuberculosis (strain CDC 1551 / Oshkosh) protein is Fluoroquinolones export ATP-binding protein MT2762.